A 505-amino-acid chain; its full sequence is Protein FAM114A2 (505 aa).

The disordered stretch occupies residues 1–65; it reads MSDKDDIETP…KPSSDLETSK (65 aa). A compositionally biased stretch (basic and acidic residues) spans 51–63; that stretch reads KRPETKPSSDLET. 3 positions are modified to phosphoserine: S87, S146, and S209. A coiled-coil region spans residues 268-295; the sequence is LNSLSGEELETLKVELEQLKETFSLAEF. The disordered stretch occupies residues 342–366; the sequence is KSLTKPLAENEEGEKQSEAENTEQV.

Belongs to the FAM114 family.

This is Protein FAM114A2 (FAM114A2) from Homo sapiens (Human).